The sequence spans 194 residues: MYIGRFVVVGPSVAAYRVSSRSFPNRKLIERPAGLTVVPTADAEETTNPYVSYNCVRTAGGHAVVGNGSHVDPITEKVERGYPPRDALTEALLAMDYEKDDYDTPRIAGVLAPDGTAYVGIVRADAVLVRAVEEPTLVATYEKDAPEAIGFDAATAADAAREAYSAAFEHAVCAAGVSRRGVGDGYDTAVVNDP.

Belongs to the archaeal IMP cyclohydrolase family.

It catalyses the reaction IMP + H2O = 5-formamido-1-(5-phospho-D-ribosyl)imidazole-4-carboxamide. The protein operates within purine metabolism; IMP biosynthesis via de novo pathway; IMP from 5-formamido-1-(5-phospho-D-ribosyl)imidazole-4-carboxamide: step 1/1. Functionally, catalyzes the cyclization of 5-formylamidoimidazole-4-carboxamide ribonucleotide to IMP. The polypeptide is IMP cyclohydrolase (Halobacterium salinarum (strain ATCC 29341 / DSM 671 / R1)).